Consider the following 260-residue polypeptide: Thiazole synthase (260 aa).

The active-site Schiff-base intermediate with DXP is the lysine 100. Residues glycine 162, 188–189 (AG), and 210–211 (NT) each bind 1-deoxy-D-xylulose 5-phosphate.

The protein belongs to the ThiG family. In terms of assembly, homotetramer. Forms heterodimers with either ThiH or ThiS.

It is found in the cytoplasm. It catalyses the reaction [ThiS sulfur-carrier protein]-C-terminal-Gly-aminoethanethioate + 2-iminoacetate + 1-deoxy-D-xylulose 5-phosphate = [ThiS sulfur-carrier protein]-C-terminal Gly-Gly + 2-[(2R,5Z)-2-carboxy-4-methylthiazol-5(2H)-ylidene]ethyl phosphate + 2 H2O + H(+). It participates in cofactor biosynthesis; thiamine diphosphate biosynthesis. In terms of biological role, catalyzes the rearrangement of 1-deoxy-D-xylulose 5-phosphate (DXP) to produce the thiazole phosphate moiety of thiamine. Sulfur is provided by the thiocarboxylate moiety of the carrier protein ThiS. In vitro, sulfur can be provided by H(2)S. This Wolinella succinogenes (strain ATCC 29543 / DSM 1740 / CCUG 13145 / JCM 31913 / LMG 7466 / NCTC 11488 / FDC 602W) (Vibrio succinogenes) protein is Thiazole synthase.